We begin with the raw amino-acid sequence, 588 residues long: bZip transcription factor GAP1 (588 aa).

A disordered region spans residues Met1–Lys49. Residues Tyr20–Met29 show a composition bias toward basic and acidic residues. A bZIP domain is found at Pro25–Tyr88. Residues Arg28 to Lys51 form a basic motif region. Positions Leu53 to Leu60 are leucine-zipper. Positions Phe164–Gly174 are enriched in polar residues. The interval Phe164 to Trp219 is disordered. The span at Asn175–Ala189 shows a compositional bias: low complexity. Transcription activation stretches follow at residues Ala189–Trp327 and Gly376–Glu477. The segment covering Lys190–Glu217 has biased composition (polar residues). Residues Cys253 to Cys265 are n-CRD. The interval Asp487–Arg529 is disordered. The segment covering Asp511 to Asp522 has biased composition (acidic residues). The segment at Cys536–Cys567 is c-CRD. Residues Ile552 to Ser559 carry the Nuclear export signal motif.

It localises to the nucleus. In terms of biological role, transcription factor that plays a critical role in response to various stresses and reduces the stress through transcriptional activation of its target genes including multidrug transporter FLR1. The polypeptide is bZip transcription factor GAP1 (Candida glabrata (strain ATCC 2001 / BCRC 20586 / JCM 3761 / NBRC 0622 / NRRL Y-65 / CBS 138) (Yeast)).